Reading from the N-terminus, the 197-residue chain is HTH-type transcriptional regulator BetI (197 aa).

The HTH tetR-type domain occupies 8-68; it reads PIRRSQLIHA…ATMRHLLSAL (61 aa). The H-T-H motif DNA-binding region spans 31–50; sequence SIALIARLAGVSNGIISHYF.

The protein operates within amine and polyamine biosynthesis; betaine biosynthesis via choline pathway [regulation]. Repressor involved in the biosynthesis of the osmoprotectant glycine betaine. It represses transcription of the choline transporter BetT and the genes of BetAB involved in the synthesis of glycine betaine. The sequence is that of HTH-type transcriptional regulator BetI from Pseudomonas aeruginosa (strain LESB58).